We begin with the raw amino-acid sequence, 115 residues long: Large ribosomal subunit protein uL22 (115 aa).

It belongs to the universal ribosomal protein uL22 family. In terms of assembly, part of the 50S ribosomal subunit.

Functionally, this protein binds specifically to 23S rRNA; its binding is stimulated by other ribosomal proteins, e.g. L4, L17, and L20. It is important during the early stages of 50S assembly. It makes multiple contacts with different domains of the 23S rRNA in the assembled 50S subunit and ribosome. The globular domain of the protein is located near the polypeptide exit tunnel on the outside of the subunit, while an extended beta-hairpin is found that lines the wall of the exit tunnel in the center of the 70S ribosome. In Coxiella burnetii (strain CbuG_Q212) (Coxiella burnetii (strain Q212)), this protein is Large ribosomal subunit protein uL22.